Here is a 720-residue protein sequence, read N- to C-terminus: ABC transporter G family member STR2 (720 aa).

Residues M1–E467 lie on the Cytoplasmic side of the membrane. Residues L25 to K274 enclose the ABC transporter domain. G70–S77 lines the ATP pocket. The segment at G313–Q346 is disordered. The segment covering S327–Q346 has biased composition (basic and acidic residues). Residues L468–M488 form a helical membrane-spanning segment. Residues H489–S502 lie on the Extracellular side of the membrane. Residues F503–I523 traverse the membrane as a helical segment. Over Q524–G547 the chain is Cytoplasmic. A helical membrane pass occupies residues L548–F568. Residues A569 to P575 lie on the Extracellular side of the membrane. A helical transmembrane segment spans residues F576–F596. Topologically, residues V597 to Y604 are cytoplasmic. A helical transmembrane segment spans residues I605 to F625. Over L626–V693 the chain is Extracellular. The N-linked (GlcNAc...) asparagine glycan is linked to N681. The helical transmembrane segment at Y694–F714 threads the bilayer. At S715–T720 the chain is on the cytoplasmic side.

It belongs to the ABC transporter superfamily. ABCG family. Stunted arbuscule (STR) subfamily. Heterodimerizes with STR; the resulting transporter is located in the peri-arbuscular membrane.

The protein localises to the cell membrane. Functionally, together with STR, required for arbuscule development in arbuscular mycorrhizal (AM) symbiosis. The chain is ABC transporter G family member STR2 from Petunia hybrida (Petunia).